Here is a 429-residue protein sequence, read N- to C-terminus: 3-phosphoshikimate 1-carboxyvinyltransferase (429 aa).

3 residues coordinate 3-phosphoshikimate: lysine 23, serine 24, and arginine 28. Residue lysine 23 coordinates phosphoenolpyruvate. Phosphoenolpyruvate-binding residues include glycine 95 and arginine 123. Serine 168, glutamine 170, aspartate 316, and lysine 343 together coordinate 3-phosphoshikimate. Position 170 (glutamine 170) interacts with phosphoenolpyruvate. Aspartate 316 functions as the Proton acceptor in the catalytic mechanism. Residues arginine 347 and arginine 389 each coordinate phosphoenolpyruvate.

Belongs to the EPSP synthase family. As to quaternary structure, monomer.

Its subcellular location is the cytoplasm. It catalyses the reaction 3-phosphoshikimate + phosphoenolpyruvate = 5-O-(1-carboxyvinyl)-3-phosphoshikimate + phosphate. It participates in metabolic intermediate biosynthesis; chorismate biosynthesis; chorismate from D-erythrose 4-phosphate and phosphoenolpyruvate: step 6/7. Catalyzes the transfer of the enolpyruvyl moiety of phosphoenolpyruvate (PEP) to the 5-hydroxyl of shikimate-3-phosphate (S3P) to produce enolpyruvyl shikimate-3-phosphate and inorganic phosphate. This is 3-phosphoshikimate 1-carboxyvinyltransferase from Bacillus thuringiensis subsp. konkukian (strain 97-27).